Consider the following 31-residue polypeptide: Kappa-theraphotoxin-Ps1b (31 aa).

Intrachain disulfides connect Cys-2–Cys-16, Cys-9–Cys-21, and Cys-15–Cys-25. Met-31 carries the methionine amide modification.

Belongs to the neurotoxin 30 (phrixotoxin) family. In terms of tissue distribution, expressed by the venom gland.

The protein resides in the secreted. Its function is as follows. Potent and specific blocker of Kv4.2/KCND2 (IC(50)=34 nM) and Kv4.3/KCND3 (IC(50)=71 nM) potassium channels. Acts by altering the gating properties of these channels. The protein is Kappa-theraphotoxin-Ps1b of Paraphysa scrofa (Chilean copper tarantula).